Reading from the N-terminus, the 295-residue chain is Pyridoxal 5'-phosphate synthase subunit PdxS (295 aa).

D25 lines the D-ribose 5-phosphate pocket. K82 (schiff-base intermediate with D-ribose 5-phosphate) is an active-site residue. G154 lines the D-ribose 5-phosphate pocket. R166 lines the D-glyceraldehyde 3-phosphate pocket. Residues G215 and 236-237 (GS) contribute to the D-ribose 5-phosphate site.

Belongs to the PdxS/SNZ family. As to quaternary structure, in the presence of PdxT, forms a dodecamer of heterodimers.

The catalysed reaction is aldehydo-D-ribose 5-phosphate + D-glyceraldehyde 3-phosphate + L-glutamine = pyridoxal 5'-phosphate + L-glutamate + phosphate + 3 H2O + H(+). The protein operates within cofactor biosynthesis; pyridoxal 5'-phosphate biosynthesis. Functionally, catalyzes the formation of pyridoxal 5'-phosphate from ribose 5-phosphate (RBP), glyceraldehyde 3-phosphate (G3P) and ammonia. The ammonia is provided by the PdxT subunit. Can also use ribulose 5-phosphate and dihydroxyacetone phosphate as substrates, resulting from enzyme-catalyzed isomerization of RBP and G3P, respectively. The polypeptide is Pyridoxal 5'-phosphate synthase subunit PdxS (Natranaerobius thermophilus (strain ATCC BAA-1301 / DSM 18059 / JW/NM-WN-LF)).